The primary structure comprises 251 residues: UDP-Glc:alpha-D-GlcNAc-diphosphoundecaprenol beta-1,3-glucosyltransferase WfaP (251 aa).

The protein belongs to the glycosyltransferase 2 family. Mn(2+) is required as a cofactor. It depends on Mg(2+) as a cofactor.

The protein localises to the cell inner membrane. The catalysed reaction is N-acetyl-alpha-D-glucosaminyl-di-trans,octa-cis-undecaprenyl diphosphate + UDP-alpha-D-glucose = beta-D-Glc-(1-&gt;3)-alpha-D-GlcNAc-di-trans,octa-cis-undecaprenyl diphosphate + UDP + H(+). The protein operates within bacterial outer membrane biogenesis; lipopolysaccharide biosynthesis. Functionally, catalyzes the addition of Glc, the second sugar moiety of the O56-antigen repeating unit, to GlcNAc-pyrophosphate-undecaprenol. This chain is UDP-Glc:alpha-D-GlcNAc-diphosphoundecaprenol beta-1,3-glucosyltransferase WfaP (wfaP), found in Escherichia coli.